A 776-amino-acid chain; its full sequence is Serine/threonine-protein kinase SIK1 (776 aa).

The region spanning 27–278 is the Protein kinase domain; that stretch reads YDVERTLGKG…IAQIRQHRWM (252 aa). Residues 33–41 and lysine 56 each bind ATP; that span reads LGKGNFAVV. Aspartate 149 serves as the catalytic Proton acceptor. Phosphothreonine; by LKB1 and GSK3-beta is present on threonine 182. Position 186 is a phosphoserine; by autocatalysis (serine 186). The UBA domain occupies 303–343; sequence DYNEQVLGIMQALGIDRQRTVESLQNSSYNHFAAIYYLLLE. Phosphothreonine; by CaMK1 is present on threonine 322. 2 disordered regions span residues 350-371 and 449-472; these read STQP…RNSD and EARQ…STGR. At serine 577 the chain carries Phosphoserine; by PKA. The interval 586 to 612 is RK-rich region; that stretch reads KAFRQQLRKNARTKGFLGLNKIKGLAR. The tract at residues 621–643 is disordered; it reads GSRGGMSTFHTPAPSSGLQGCTA. Polar residues predominate over residues 628–643; sequence TFHTPAPSSGLQGCTA.

The protein belongs to the protein kinase superfamily. CAMK Ser/Thr protein kinase family. AMPK subfamily. In terms of assembly, interacts (when phosphorylated on Thr-182 and Ser-186) with YWHAZ. Interacts with ATP1A1. Mg(2+) is required as a cofactor. Phosphorylated at Thr-182 by STK11/LKB1 in complex with STE20-related adapter-alpha (STRADA) pseudo kinase and CAB39, leading to its activation. Phosphorylation at Thr-182 promotes autophosphorylation at Ser-186, which is required for sustained activity. Autophosphorylation at Ser-186 is maintained by sequential phosphorylation at Thr-182 by GSK3-beta. GSK3-beta cannot initiate phosphorylation at Thr-182, it can only maintain it. Phosphorylation at Ser-577 by PKA promotes translocation to the cytoplasm. Phosphorylation at Thr-322 by CaMK1 following intracellular sodium concentration leads to activation.

Its subcellular location is the cytoplasm. The protein localises to the nucleus. The catalysed reaction is L-seryl-[protein] + ATP = O-phospho-L-seryl-[protein] + ADP + H(+). It carries out the reaction L-threonyl-[protein] + ATP = O-phospho-L-threonyl-[protein] + ADP + H(+). Its activity is regulated as follows. Activated by phosphorylation on Thr-182. Also activated by phosphorylation on Thr-322 in response to increases in intracellular sodium in parallel with elevations in intracellular calcium through the reversible sodium/calcium exchanger. In terms of biological role, serine/threonine-protein kinase involved in various processes such as cell cycle regulation, gluconeogenesis and lipogenesis regulation, muscle growth and differentiation and tumor suppression. Phosphorylates HDAC4, HDAC5, PPME1, SREBF1, CRTC1/TORC1 and CRTC2/TORC2. Acts as a tumor suppressor and plays a key role in p53/TP53-dependent anoikis, a type of apoptosis triggered by cell detachment: required for phosphorylation of p53/TP53 in response to loss of adhesion and is able to suppress metastasis. Part of a sodium-sensing signaling network, probably by mediating phosphorylation of PPME1: following increases in intracellular sodium, SIK1 is activated by CaMK1 and phosphorylates PPME1 subunit of protein phosphatase 2A (PP2A), leading to dephosphorylation of sodium/potassium-transporting ATPase ATP1A1 and subsequent increase activity of ATP1A1. Acts as a regulator of muscle cells by phosphorylating and inhibiting class II histone deacetylases HDAC4 and HDAC5, leading to promote expression of MEF2 target genes in myocytes. Also required during cardiomyogenesis by regulating the exit of cardiomyoblasts from the cell cycle via down-regulation of CDKN1C/p57Kip2. Acts as a regulator of hepatic gluconeogenesis by phosphorylating and repressing the CREB-specific coactivators CRTC1/TORC1 and CRTC2/TORC2, leading to inhibit CREB activity. Also regulates hepatic lipogenesis by phosphorylating and inhibiting SREBF1. In concert with CRTC1/TORC1, regulates the light-induced entrainment of the circadian clock by attenuating PER1 induction; represses CREB-mediated transcription of PER1 by phosphorylating and deactivating CRTC1/TORC1. The sequence is that of Serine/threonine-protein kinase SIK1 (Sik1) from Rattus norvegicus (Rat).